The sequence spans 349 residues: Cytoplasmic tRNA 2-thiolation protein 2 (349 aa).

Belongs to the CTU2/NCS2 family.

It localises to the cytoplasm. It functions in the pathway tRNA modification; 5-methoxycarbonylmethyl-2-thiouridine-tRNA biosynthesis. Plays a central role in 2-thiolation of mcm(5)S(2)U at tRNA wobble positions of tRNA(Lys), tRNA(Glu) and tRNA(Gln). May act by forming a heterodimer with tut-1/ctu-1 that ligates sulfur from thiocarboxylated urm-1 onto the uridine of tRNAs at wobble position. The sequence is that of Cytoplasmic tRNA 2-thiolation protein 2 from Caenorhabditis briggsae.